The sequence spans 502 residues: D-alanine--D-alanyl carrier protein ligase (502 aa).

150-151 (TS) contacts ATP. D195 lines the D-alanine pocket. 290-295 (NTYGPT) contributes to the ATP binding site. V299 provides a ligand contact to D-alanine. Positions 381 and 490 each coordinate ATP. K490 lines the D-alanine pocket.

It belongs to the ATP-dependent AMP-binding enzyme family. DltA subfamily.

Its subcellular location is the cytoplasm. The catalysed reaction is holo-[D-alanyl-carrier protein] + D-alanine + ATP = D-alanyl-[D-alanyl-carrier protein] + AMP + diphosphate. It functions in the pathway cell wall biogenesis; lipoteichoic acid biosynthesis. In terms of biological role, catalyzes the first step in the D-alanylation of lipoteichoic acid (LTA), the activation of D-alanine and its transfer onto the D-alanyl carrier protein (Dcp) DltC. In an ATP-dependent two-step reaction, forms a high energy D-alanyl-AMP intermediate, followed by transfer of the D-alanyl residue as a thiol ester to the phosphopantheinyl prosthetic group of the Dcp. D-alanylation of LTA plays an important role in modulating the properties of the cell wall in Gram-positive bacteria, influencing the net charge of the cell wall. In Bacillus licheniformis (strain ATCC 14580 / DSM 13 / JCM 2505 / CCUG 7422 / NBRC 12200 / NCIMB 9375 / NCTC 10341 / NRRL NRS-1264 / Gibson 46), this protein is D-alanine--D-alanyl carrier protein ligase.